We begin with the raw amino-acid sequence, 702 residues long: NAD(P)H-quinone oxidoreductase subunit 5, chloroplastic (702 aa).

16 helical membrane-spanning segments follow: residues 7–27 (YVWI…LGLI), 40–60 (SAIL…TVLW), 91–111 (PLSA…MIYT), 124–144 (FFAY…SPNL), 147–167 (VYAF…FWFT), 189–209 (LLLG…DIVA), 224–244 (VLLT…SAQF), 258–278 (TPIS…YLVA), 289–309 (LVMD…ATVA), 327–347 (LGYM…FHLI), 354–374 (ALLF…VGYN), 395–415 (GVTF…ACFW), 427–447 (KLPV…FYMF), 511–531 (IPLI…APLP), 562–582 (FAIT…IAWI), and 680–700 (IFVL…FNFF).

It belongs to the complex I subunit 5 family. As to quaternary structure, NDH is composed of at least 16 different subunits, 5 of which are encoded in the nucleus.

The protein resides in the plastid. Its subcellular location is the chloroplast thylakoid membrane. The enzyme catalyses a plastoquinone + NADH + (n+1) H(+)(in) = a plastoquinol + NAD(+) + n H(+)(out). It carries out the reaction a plastoquinone + NADPH + (n+1) H(+)(in) = a plastoquinol + NADP(+) + n H(+)(out). Functionally, NDH shuttles electrons from NAD(P)H:plastoquinone, via FMN and iron-sulfur (Fe-S) centers, to quinones in the photosynthetic chain and possibly in a chloroplast respiratory chain. The immediate electron acceptor for the enzyme in this species is believed to be plastoquinone. Couples the redox reaction to proton translocation, and thus conserves the redox energy in a proton gradient. In Zygnema circumcarinatum (Green alga), this protein is NAD(P)H-quinone oxidoreductase subunit 5, chloroplastic (ndhF).